A 63-amino-acid chain; its full sequence is Adipokinetic prohormone type 1 (63 aa).

The N-terminal stretch at methionine 1–alanine 22 is a signal peptide. Glutamine 23 is subject to Pyrrolidone carboxylic acid. Residue threonine 32 is modified to Threonine amide.

Belongs to the AKH/HRTH/RPCH family. In terms of assembly, adipokinetic hormone precursor-related peptide (APRP) can form three type of disulfide-bond dimers: p1 (alpha-alpha), p2 (alpha-beta), and p3 (beta-beta).

It localises to the secreted. This hormone, released from cells in the corpora cardiaca, causes release of diglycerides from the fat body and stimulation of muscles to use these diglycerides as an energy source during energy-demanding processes. The polypeptide is Adipokinetic prohormone type 1 (Schistocerca gregaria (Desert locust)).